Consider the following 146-residue polypeptide: Large ribosomal subunit protein uL15 (146 aa).

Basic and acidic residues predominate over residues 1-13 (MKLHELKPAEGSR). The interval 1-51 (MKLHELKPAEGSRKVRNRVGRGIGSGNGKTAGKGHKGQNARSGGGVRLGFE) is disordered. 2 stretches are compositionally biased toward gly residues: residues 21–31 (RGIGSGNGKTA) and 42–51 (SGGGVRLGFE).

It belongs to the universal ribosomal protein uL15 family. In terms of assembly, part of the 50S ribosomal subunit.

Its function is as follows. Binds to the 23S rRNA. The sequence is that of Large ribosomal subunit protein uL15 from Bacillus cereus (strain G9842).